Consider the following 184-residue polypeptide: Photosystem I assembly protein Ycf4 (184 aa).

Transmembrane regions (helical) follow at residues 22 to 42 and 57 to 77; these read FFWA…GTSS and ISFF…LFIS.

Belongs to the Ycf4 family.

It is found in the plastid. The protein localises to the chloroplast thylakoid membrane. Functionally, seems to be required for the assembly of the photosystem I complex. The sequence is that of Photosystem I assembly protein Ycf4 from Lemna minor (Common duckweed).